The sequence spans 1500 residues: Secreted chitinase LysM12 (1500 aa).

The N-terminal stretch at 1 to 23 (MAPLWNGMAAGLLLSAAVVSGQA) is a signal peptide. N-linked (GlcNAc...) asparagine glycans are attached at residues Asn-53, Asn-225, Asn-251, and Asn-270. 2 LysM domains span residues 303-348 (RTQK…HVCC) and 367-415 (ATTT…VICI). In terms of domain architecture, Chitin-binding type-1 spans 428 to 496 (DAECGPQVPG…TNGCISHCGM (69 aa)). 4 disulfide bridges follow: Cys-431/Cys-459, Cys-453/Cys-465, Cys-458/Cys-472, and Cys-490/Cys-494. Positions 507 to 879 (FRSVGYYESY…PGMILQMKSG (373 aa)) constitute a GH18 domain. Catalysis depends on Glu-625, which acts as the Proton donor. Tyr-626 is a chitin binding site. N-linked (GlcNAc...) asparagine glycosylation is found at Asn-721 and Asn-800. Trp-852 provides a ligand contact to chitin. N-linked (GlcNAc...) asparagine glycosylation is found at Asn-892 and Asn-983. Residues 1164-1193 (IPKDIPYPDKTKRKDKDDDDNKKTEATDSE) form a disordered region. The span at 1169–1193 (PYPDKTKRKDKDDDDNKKTEATDSE) shows a compositional bias: basic and acidic residues.

It belongs to the glycosyl hydrolase 18 family. Chitinase class V subfamily.

It localises to the secreted. The enzyme catalyses Random endo-hydrolysis of N-acetyl-beta-D-glucosaminide (1-&gt;4)-beta-linkages in chitin and chitodextrins.. Its function is as follows. Secreted chitinase involved in the degradation of chitin, a component of the cell walls of fungi and exoskeletal elements of some animals (including worms and arthropods). Involved in pathogenesis via manipulation of host defenses for successful infection. The chain is Secreted chitinase LysM12 from Penicillium expansum (Blue mold rot fungus).